Consider the following 470-residue polypeptide: Argininosuccinate lyase (470 aa).

It belongs to the lyase 1 family. Argininosuccinate lyase subfamily.

The protein resides in the cytoplasm. The catalysed reaction is 2-(N(omega)-L-arginino)succinate = fumarate + L-arginine. The protein operates within amino-acid biosynthesis; L-arginine biosynthesis; L-arginine from L-ornithine and carbamoyl phosphate: step 3/3. In Mycobacterium sp. (strain MCS), this protein is Argininosuccinate lyase.